Consider the following 332-residue polypeptide: Phosphoenolpyruvate transferase (332 aa).

Residue D63 participates in 7,8-didemethyl-8-hydroxy-5-deazariboflavin binding.

The protein belongs to the CofD family. Homodimer. It depends on Mg(2+) as a cofactor.

It carries out the reaction enolpyruvoyl-2-diphospho-5'-guanosine + 7,8-didemethyl-8-hydroxy-5-deazariboflavin = dehydro coenzyme F420-0 + GMP + H(+). The protein operates within cofactor biosynthesis; coenzyme F420 biosynthesis. Its function is as follows. Catalyzes the transfer of the phosphoenolpyruvate moiety from enoylpyruvoyl-2-diphospho-5'-guanosine (EPPG) to 7,8-didemethyl-8-hydroxy-5-deazariboflavin (FO) with the formation of dehydro coenzyme F420-0 and GMP. The protein is Phosphoenolpyruvate transferase of Nocardia farcinica (strain IFM 10152).